The primary structure comprises 1004 residues: Liprin-beta homolog (1004 aa).

Composition is skewed to low complexity over residues 50-63 and 149-161; these read NGNSTSRSTTTIGS and SPPSDLPTSSSSL. 2 disordered regions span residues 50–122 and 135–161; these read NGNS…RSSR and HRTDLGSDGSSGVESPPSDLPTSSSSL. 2 coiled-coil regions span residues 280–328 and 364–396; these read CQEL…VNQS and DEMSQLRTAVQRLMADNEHKSLQINTLRNALDE. 4 disordered regions span residues 341-366, 432-497, 528-550, and 648-686; these read HTNGHSSGGYMSPLREHRSEKNDDEM, PSDS…GGNQ, NGNEGANHNYSSASLPRGVGKAS, and FSKLTRSTSQDQSNSFRRGSAARSTSTARLGSTNHLGTV. Residues 434–453 show a composition bias toward polar residues; the sequence is DSMSHSTSFPVSLSSTTSNG. The segment covering 458-474 has biased composition (low complexity); the sequence is STVQSSSSYNSSLSAVS. 2 stretches are compositionally biased toward polar residues: residues 531–541 and 648–684; these read EGANHNYSSAS and FSKLTRSTSQDQSNSFRRGSAARSTSTARLGSTNHLG. SAM domains lie at 698-762, 770-833, and 858-930; these read WRSE…IEED, WDVH…LKKA, and VVRW…LLGP.

The protein belongs to the liprin family. Liprin-beta subfamily. Expressed in pharyngeal muscle, particularly posterior bulb, adjacent to the dorsal and ventral cord (but not in ventral cord neurons), and in body wall muscles.

In terms of biological role, involved in the regulation of synaptic function at neuromuscular junctions. Together with the liprin-alpha protein syd-2, may play a role in regulating the structure of the neuronal region, called the active zone, from which synaptic vesicles send neurotransmitter signals across the synapse. Does not seem to be required for neuronal development. May regulate the disassembly of focal adhesions. Does not bind receptor-like tyrosine phosphatases type 2A. The sequence is that of Liprin-beta homolog from Caenorhabditis elegans.